A 562-amino-acid polypeptide reads, in one-letter code: Thermosome subunit alpha (562 aa).

Disordered stretches follow at residues methionine 1–glutamate 23 and glycine 526–glycine 551. The segment covering glycine 537–glycine 551 has biased composition (gly residues).

Belongs to the TCP-1 chaperonin family. As to quaternary structure, forms an oligomeric complex of eight-membered rings.

Functionally, molecular chaperone; binds unfolded polypeptides in vitro, and has a weak ATPase activity. This chain is Thermosome subunit alpha (thsA), found in Halobacterium salinarum (strain ATCC 700922 / JCM 11081 / NRC-1) (Halobacterium halobium).